Consider the following 210-residue polypeptide: Nucleoside triphosphate pyrophosphatase (210 aa).

Asp-79 acts as the Proton acceptor in catalysis.

The protein belongs to the Maf family. The cofactor is a divalent metal cation.

It localises to the cytoplasm. The catalysed reaction is a ribonucleoside 5'-triphosphate + H2O = a ribonucleoside 5'-phosphate + diphosphate + H(+). The enzyme catalyses a 2'-deoxyribonucleoside 5'-triphosphate + H2O = a 2'-deoxyribonucleoside 5'-phosphate + diphosphate + H(+). Nucleoside triphosphate pyrophosphatase. May have a dual role in cell division arrest and in preventing the incorporation of modified nucleotides into cellular nucleic acids. This chain is Nucleoside triphosphate pyrophosphatase, found in Mycolicibacterium paratuberculosis (strain ATCC BAA-968 / K-10) (Mycobacterium paratuberculosis).